A 60-amino-acid chain; its full sequence is MKSVILLFAVIAIIVAVIIPAINGESSSNPSANAGIMESLKQLSAKAEELIKKLLAKKAK.

Residues 1-24 (MKSVILLFAVIAIIVAVIIPAING) form the signal peptide. Positions 25 to 34 (ESSSNPSANA) are excised as a propeptide.

Belongs to the formicidae venom precursor-01 superfamily. In terms of tissue distribution, expressed by the venom gland.

It localises to the secreted. Its function is as follows. Induces paralysis 5 minutes after injection into blowflies (L.caesar), and then death within 24 hours. May have antimicrobial properties, like most ant linear peptides. This chain is U20-myrmicitoxin-Mri1a, found in Manica rubida (European giant red ant).